The following is an 80-amino-acid chain: UPF0181 protein SG1330 (80 aa).

Residues 58-80 are disordered; sequence TEVLETPAARAETDPYDSNPDDD.

Belongs to the UPF0181 family.

The chain is UPF0181 protein SG1330 from Sodalis glossinidius (strain morsitans).